A 235-amino-acid polypeptide reads, in one-letter code: Sugar fermentation stimulation protein homolog (235 aa).

This sequence belongs to the SfsA family.

The chain is Sugar fermentation stimulation protein homolog from Azotobacter vinelandii (strain DJ / ATCC BAA-1303).